Consider the following 141-residue polypeptide: Nucleoside diphosphate kinase (141 aa).

ATP-binding residues include Lys11, Phe59, Arg87, Thr93, Arg104, and Asn114. His117 functions as the Pros-phosphohistidine intermediate in the catalytic mechanism.

Belongs to the NDK family. In terms of assembly, homotetramer. Mg(2+) is required as a cofactor.

The protein resides in the cytoplasm. The catalysed reaction is a 2'-deoxyribonucleoside 5'-diphosphate + ATP = a 2'-deoxyribonucleoside 5'-triphosphate + ADP. The enzyme catalyses a ribonucleoside 5'-diphosphate + ATP = a ribonucleoside 5'-triphosphate + ADP. Functionally, major role in the synthesis of nucleoside triphosphates other than ATP. The ATP gamma phosphate is transferred to the NDP beta phosphate via a ping-pong mechanism, using a phosphorylated active-site intermediate. The protein is Nucleoside diphosphate kinase of Pseudomonas syringae pv. tomato (strain ATCC BAA-871 / DC3000).